We begin with the raw amino-acid sequence, 133 residues long: Ribonuclease P protein component (133 aa).

This sequence belongs to the RnpA family. Consists of a catalytic RNA component (M1 or rnpB) and a protein subunit.

The enzyme catalyses Endonucleolytic cleavage of RNA, removing 5'-extranucleotides from tRNA precursor.. Its function is as follows. RNaseP catalyzes the removal of the 5'-leader sequence from pre-tRNA to produce the mature 5'-terminus. It can also cleave other RNA substrates such as 4.5S RNA. The protein component plays an auxiliary but essential role in vivo by binding to the 5'-leader sequence and broadening the substrate specificity of the ribozyme. The protein is Ribonuclease P protein component of Corynebacterium glutamicum (strain ATCC 13032 / DSM 20300 / JCM 1318 / BCRC 11384 / CCUG 27702 / LMG 3730 / NBRC 12168 / NCIMB 10025 / NRRL B-2784 / 534).